We begin with the raw amino-acid sequence, 749 residues long: MERTYDYAWIIPFIPLTVPMSIGLGLLLVPTATKSILRMWAFFSVSLLSIVMVFSADLSIQQINCSFIYQYLWSWTINSDFSLELGCLIDPLTSIMLILITTVGIMVLIYSDNYMSHDQGYLRFFASMSFSNTSMLGLVTSSNLIQIYIFWELVGMCSYLLIGFWFTRPIAANACQKAFVTNRVGDFGLLLGILGLYWITGSFEFRDLFKIFNNLIHNNGVNSLFVTFFASLLFLGAVAKSAQFPLHIWLPDAMEGPTPISALIHAATMVVAGIFLVARLLPLFTVIPYIMNLISLIGVITLLLGATFALAQRDIKKSLAYSTMSQLGYIMLAPGIGSYRAASFHLITHAYSKALLFLGSGSIIHSMEPIVGYSPDKSQNMILMGGLTKYLPITKITFLLGTLSLCGIPPLACFWSKDEILNDSWLYSPIFAIIACFTTGLTAFYMFRMYLLTFEEHLRVHFQKYSGATNSSFYSISIWGKEASQLLNSGLLLSTMNNNEKVSFFLNKTYEIDENVRKMMRSFSTSTHFVKKKTPMYPHESDNTMLLPLLVLVIFTLFVGFIGVRFDQGVMDLDILSKWLTPSINFLHRNLNDPWDWYEFATNAIFSVSIACFGIWIASLLYGSVYSSFQNLDLMNSFVKIDSKRILLEPIINVIYNWSYNRGYIDVYYATVFTRGIRGLAKLTHSFDRRVIDGITNGFGIASFFVGEGVKYVGGGRISSYLFLYLSYVSIFLVISYFCFGICNSILFF.

The next 16 membrane-spanning stretches (helical) occupy residues 9–29 (WIIP…LLLV), 40–60 (WAFF…DLSI), 89–109 (IDPL…MVLI), 147–167 (IYIF…FWFT), 185–205 (GDFG…SFEF), 219–239 (NGVN…GAVA), 258–278 (TPIS…FLVA), 280–300 (LLPL…IGVI), 327–347 (LGYI…FHLI), 354–374 (ALLF…VGYS), 396–416 (ITFL…CFWS), 425–445 (WLYS…TAFY), 544–564 (TMLL…FIGV), 605–625 (IFSV…YGSV), 694–714 (GITN…KYVG), and 722–742 (LFLY…CFGI).

The protein belongs to the complex I subunit 5 family. In terms of assembly, NDH is composed of at least 16 different subunits, 5 of which are encoded in the nucleus.

The protein localises to the plastid. It localises to the chloroplast thylakoid membrane. The enzyme catalyses a plastoquinone + NADH + (n+1) H(+)(in) = a plastoquinol + NAD(+) + n H(+)(out). It carries out the reaction a plastoquinone + NADPH + (n+1) H(+)(in) = a plastoquinol + NADP(+) + n H(+)(out). NDH shuttles electrons from NAD(P)H:plastoquinone, via FMN and iron-sulfur (Fe-S) centers, to quinones in the photosynthetic chain and possibly in a chloroplast respiratory chain. The immediate electron acceptor for the enzyme in this species is believed to be plastoquinone. Couples the redox reaction to proton translocation, and thus conserves the redox energy in a proton gradient. This Illicium oligandrum (Star anise) protein is NAD(P)H-quinone oxidoreductase subunit 5, chloroplastic (ndhF).